The primary structure comprises 692 residues: Small conductance calcium-activated potassium channel-like protein 3 (692 aa).

A helical transmembrane segment spans residues 270–290 (SLYLALFGVILMLVESEITAE). Residues 313–333 (TIALLYHIILYHLNDIVLELV) form a helical membrane-spanning segment. A helical membrane pass occupies residues 349-369 (VIQFCIEFICCGICPLPGSGE). Residues 401 to 421 (VILSCFMLCRSYLFARFMVLH) form a helical membrane-spanning segment. Residues 455–475 (PVLFLTTFTFIFWIIMSWMFV) traverse the membrane as a helical segment. The pore-forming intramembrane region spans 492–512 (YSNSLWFIAITFMLNGYGDIV). The chain crosses the membrane as a helical span at residues 520-540 (FIAIFVGVVGAVISSILIAVI). The segment covering 667 to 683 (HSTPNVPHLQGLTSSPV) has biased composition (polar residues). The tract at residues 667–692 (HSTPNVPHLQGLTSSPVPSDRYDNRF) is disordered.

This sequence belongs to the potassium channel KCNN family. SK subfamily. Heterooligomer.

It is found in the membrane. Functionally, forms a voltage-independent potassium channel activated by intracellular calcium. In Caenorhabditis elegans, this protein is Small conductance calcium-activated potassium channel-like protein 3 (kcnl-3).